An 843-amino-acid polypeptide reads, in one-letter code: F-box only protein 11 (843 aa).

The tract at residues methionine 1–serine 63 is disordered. Residues proline 30 to asparagine 45 show a composition bias toward polar residues. Residues glutamine 69 to leucine 115 form the F-box domain. 19 PbH1 repeats span residues glycine 311–aspartate 333, histidine 334–asparagine 356, histidine 357–aspartate 379, histidine 380–alanine 402, tyrosine 403–glutamate 425, lysine 426–serine 448, asparagine 449–glycine 471, aspartate 472–threonine 494, asparagine 495–glutamate 517, lysine 518–threonine 540, glycine 541–aspartate 563, asparagine 564–threonine 586, glycine 587–asparagine 609, serine 610–threonine 632, aspartate 633–asparagine 655, glycine 656–threonine 678, asparagine 679–asparagine 701, histidine 702–serine 724, and glycine 725–valine 746. The UBR-type zinc finger occupies glycine 749 to glutamate 820.

In terms of assembly, component of the SCF(FBXO11) complex consisting of CUL1, RBX1, SKP1 and FBXO11. Interacts with CIITA.

It localises to the nucleus. Its subcellular location is the chromosome. The protein operates within protein modification; protein ubiquitination. Substrate recognition component of a SCF (SKP1-CUL1-F-box protein) E3 ubiquitin-protein ligase complex which mediates the ubiquitination and subsequent proteasomal degradation of target proteins, such as DTL/CDT2, BCL6, SNAI1 and PRDM1/BLIMP1. The SCF(FBXO11) complex mediates ubiquitination and degradation of BCL6, thereby playing a role in the germinal center B-cells terminal differentiation toward memory B-cells and plasma cells. The SCF(FBXO11) complex also mediates ubiquitination and degradation of DTL, an important step for the regulation of TGF-beta signaling, cell migration and the timing of the cell-cycle progression and exit. The SCF(FBXO11) complex also catalyzes ubiquitination and degradation of GSK3B-phosphorylated SNAI1. Binds to and neddylates phosphorylated p53/TP53, inhibiting its transcriptional activity. Plays a role in the regulatiom of erythropoiesis but not myelopoiesis or megakaryopoiesis. Mechanistically, activates erythroid genes by mediating the degradation of BAHD1, a heterochromatin-associated protein that recruits corepressors to H3K27me3 marks. Participates in macrophage cell death and inflammation in response to bacterial toxins by regulating the expression of complement 5a receptor 1/C5AR1 and IL-1beta. Acts as a critical regulator to determine the level of MHC-II by mediating the recognition of degron at the P/S/T domain of CIITA leading to its ubiquitination and subsequent degradation via the proteasome. Participates in the antiviral repsonse by initiating the activation of TBK1-IRF3-IFN-I axis. Mediates the 'Lys-63'-linked ubiquitination of TRAF3 to strengthen the interaction between TRAF3 and TBK1. The protein is F-box only protein 11 (Fbxo11) of Rattus norvegicus (Rat).